An 888-amino-acid chain; its full sequence is Alanine--tRNA ligase (888 aa).

4 residues coordinate Zn(2+): His573, His577, Cys676, and His680.

The protein belongs to the class-II aminoacyl-tRNA synthetase family. It depends on Zn(2+) as a cofactor.

Its subcellular location is the cytoplasm. It catalyses the reaction tRNA(Ala) + L-alanine + ATP = L-alanyl-tRNA(Ala) + AMP + diphosphate. In terms of biological role, catalyzes the attachment of alanine to tRNA(Ala) in a two-step reaction: alanine is first activated by ATP to form Ala-AMP and then transferred to the acceptor end of tRNA(Ala). Also edits incorrectly charged Ser-tRNA(Ala) and Gly-tRNA(Ala) via its editing domain. This chain is Alanine--tRNA ligase, found in Corynebacterium glutamicum (strain R).